Reading from the N-terminus, the 192-residue chain is MLLFPGLKPVLNASTVIVNPVRAVFPGLVLSTKRSFYSINRLNAENKINDIANTSKEASSSVQMFKPPEFSQFKDSYQKDYERIAKYTLIPLTMVPFYASFTGGVINPLLDASLSSIFLIYLQYGFTSCIIDYIPKEKYPRWHKLALYCLYGGSMLSLYGIYELETKNNGFVDLVKKLWNENDDHLYIFGRN.

A mitochondrion-targeting transit peptide spans M1–L42. At N43–T88 the chain is on the mitochondrial matrix side. A helical membrane pass occupies residues L89–L109. Topologically, residues L110–S113 are mitochondrial intermembrane. A helical transmembrane segment spans residues L114–I134. Residues P135–K144 lie on the Mitochondrial matrix side of the membrane. The helical transmembrane segment at L145 to E165 threads the bilayer. Topologically, residues T166 to N192 are mitochondrial intermembrane.

Belongs to the CybS family. As to quaternary structure, component of the TIM22 complex, whose core is composed of TIM18, TIM22 and TIM54, associated with the peripheral proteins MRS5/TIM12 and the 70 kDa heterohexamer composed of TIM9 and TIM10 (or TIM8 and TIM13).

The protein localises to the mitochondrion inner membrane. In terms of biological role, component of the TIM22 complex, a complex that mediates the import and insertion of multi-pass transmembrane proteins into the mitochondrial inner membrane. The TIM22 complex forms a twin-pore translocase that uses the membrane potential as external driving force. Its role in the complex is unclear but it may be involved in the assembly and stabilization of the TIM22 complex. This is Mitochondrial import inner membrane translocase subunit TIM18 (TIM18) from Saccharomyces cerevisiae (strain ATCC 204508 / S288c) (Baker's yeast).